The sequence spans 256 residues: Acetyl-coenzyme A carboxylase carboxyl transferase subunit alpha (256 aa).

Residues 1–236 (MTKITRIIKE…KEEIAAELDS (236 aa)) enclose the CoA carboxyltransferase C-terminal domain.

It belongs to the AccA family. In terms of assembly, acetyl-CoA carboxylase is a heterohexamer composed of biotin carboxyl carrier protein (AccB), biotin carboxylase (AccC) and two subunits each of ACCase subunit alpha (AccA) and ACCase subunit beta (AccD).

The protein localises to the cytoplasm. It catalyses the reaction N(6)-carboxybiotinyl-L-lysyl-[protein] + acetyl-CoA = N(6)-biotinyl-L-lysyl-[protein] + malonyl-CoA. Its pathway is lipid metabolism; malonyl-CoA biosynthesis; malonyl-CoA from acetyl-CoA: step 1/1. Functionally, component of the acetyl coenzyme A carboxylase (ACC) complex. First, biotin carboxylase catalyzes the carboxylation of biotin on its carrier protein (BCCP) and then the CO(2) group is transferred by the carboxyltransferase to acetyl-CoA to form malonyl-CoA. This chain is Acetyl-coenzyme A carboxylase carboxyl transferase subunit alpha, found in Streptococcus sanguinis (strain SK36).